Reading from the N-terminus, the 526-residue chain is Glutamate--cysteine ligase (526 aa).

The protein belongs to the glutamate--cysteine ligase type 1 family. Type 1 subfamily.

It catalyses the reaction L-cysteine + L-glutamate + ATP = gamma-L-glutamyl-L-cysteine + ADP + phosphate + H(+). The protein operates within sulfur metabolism; glutathione biosynthesis; glutathione from L-cysteine and L-glutamate: step 1/2. The protein is Glutamate--cysteine ligase of Shewanella amazonensis (strain ATCC BAA-1098 / SB2B).